Consider the following 878-residue polypeptide: Alanine--tRNA ligase (878 aa).

Zn(2+)-binding residues include histidine 567, histidine 571, cysteine 669, and histidine 673.

This sequence belongs to the class-II aminoacyl-tRNA synthetase family. Zn(2+) serves as cofactor.

Its subcellular location is the cytoplasm. It carries out the reaction tRNA(Ala) + L-alanine + ATP = L-alanyl-tRNA(Ala) + AMP + diphosphate. Functionally, catalyzes the attachment of alanine to tRNA(Ala) in a two-step reaction: alanine is first activated by ATP to form Ala-AMP and then transferred to the acceptor end of tRNA(Ala). Also edits incorrectly charged Ser-tRNA(Ala) and Gly-tRNA(Ala) via its editing domain. The chain is Alanine--tRNA ligase from Rickettsia akari (strain Hartford).